A 340-amino-acid chain; its full sequence is Complement decay-accelerating factor (340 aa).

4 Sushi domains span residues 1 to 55 (VPNA…FCNR), 56 to 119 (SCEV…FCKK), 120 to 181 (KSCP…ECRE), and 182 to 244 (IYCP…ECRG). Residues C24 and C53 are joined by a disulfide bond. Residue N54 is glycosylated (N-linked (GlcNAc...) asparagine). 6 disulfide bridges follow: C57–C104, C88–C117, C122–C163, C149–C179, C184–C226, and C212–C242. N107 is a glycosylation site (N-linked (GlcNAc...) asparagine). The interval 235-317 (WSGPPPECRG…SGTTSGTTSL (83 aa)) is disordered. Residues 246–268 (SLTSKVPPTVQKPTTVNVPTTEV) show a composition bias toward polar residues. Low complexity-rich tracts occupy residues 269–287 (SPTS…AQAT) and 307–317 (GSGTTSGTTSL). S312 is lipidated: GPI-anchor amidated serine. A propeptide spans 313–340 (GTTSLLSGHKCFTLTGLLGTLVTMGLLT) (removed in mature form).

The protein belongs to the receptors of complement activation (RCA) family. Monomer (major form) and non-disulfide-linked, covalent homodimer (minor form). Interacts with ADGRE5. Post-translationally, the Ser/Thr-rich domain is heavily O-glycosylated.

It is found in the cell membrane. This protein recognizes C4b and C3b fragments that condense with cell-surface hydroxyl or amino groups when nascent C4b and C3b are locally generated during C4 and c3 activation. Interaction of daf with cell-associated C4b and C3b polypeptides interferes with their ability to catalyze the conversion of C2 and factor B to enzymatically active C2a and Bb and thereby prevents the formation of C4b2a and C3bBb, the amplification convertases of the complement cascade. Inhibits complement activation by destabilizing and preventing the formation of C3 and C5 convertases, which prevents complement damage. This Pongo pygmaeus (Bornean orangutan) protein is Complement decay-accelerating factor (CD55).